The following is a 122-amino-acid chain: Small ribosomal subunit protein uS13 (122 aa).

A compositionally biased stretch (basic residues) spans 95-116; the sequence is GLPVRGQKTKTNARTRKGRRKT. The segment at 95–122 is disordered; the sequence is GLPVRGQKTKTNARTRKGRRKTVGAATK.

This sequence belongs to the universal ribosomal protein uS13 family. As to quaternary structure, part of the 30S ribosomal subunit. Forms a loose heterodimer with protein S19. Forms two bridges to the 50S subunit in the 70S ribosome.

Functionally, located at the top of the head of the 30S subunit, it contacts several helices of the 16S rRNA. In the 70S ribosome it contacts the 23S rRNA (bridge B1a) and protein L5 of the 50S subunit (bridge B1b), connecting the 2 subunits; these bridges are implicated in subunit movement. Contacts the tRNAs in the A and P-sites. In Campylobacter concisus (strain 13826), this protein is Small ribosomal subunit protein uS13.